A 413-amino-acid polypeptide reads, in one-letter code: Scarecrow-like protein 21 (413 aa).

The GRAS domain occupies 41-413; it reads IVEAISRGDL…RILVSSCAWK (373 aa). The segment at 48-108 is leucine repeat I (LRI); sequence GDLKLVLVAC…VARLAASGSS (61 aa). The VHIID stretch occupies residues 127–192; the sequence is VYVLHEVCPY…GGAPNIRITG (66 aa). The VHIID signature appears at 158–162; that stretch reads IHIID. The tract at residues 201 to 233 is leucine repeat II (LRII); sequence TVKKRLEKLAKKFDVPFRFNAVSRPSCEVEVEN. The segment at 242–336 is PFYRE; the sequence is LGVNFAYMLH…QHCMARDVVN (95 aa). The tract at residues 339-413 is SAW; that stretch reads ACEGAERIER…RILVSSCAWK (75 aa).

The protein belongs to the GRAS family. Interacts with Meloidogyne incognita 16D10. Expressed in seedlings, roots, cotyledons, leaves and flowers.

The protein localises to the nucleus. Probable transcription factor involved in plant development. In Arabidopsis thaliana (Mouse-ear cress), this protein is Scarecrow-like protein 21 (SCL21).